The sequence spans 509 residues: UDP-N-acetylmuramyl-tripeptide synthetase (509 aa).

124 to 130 (GTNGKTS) provides a ligand contact to ATP. UDP-N-acetyl-alpha-D-muramoyl-L-alanyl-D-glutamate is bound by residues 164–165 (TT), S191, and R199. K231 carries the post-translational modification N6-carboxylysine.

The protein belongs to the MurCDEF family. MurE subfamily. In terms of processing, carboxylation is probably crucial for Mg(2+) binding and, consequently, for the gamma-phosphate positioning of ATP.

Its subcellular location is the cytoplasm. It participates in cell wall biogenesis; peptidoglycan biosynthesis. Functionally, catalyzes the addition of an amino acid to the nucleotide precursor UDP-N-acetylmuramoyl-L-alanyl-D-glutamate (UMAG) in the biosynthesis of bacterial cell-wall peptidoglycan. The sequence is that of UDP-N-acetylmuramyl-tripeptide synthetase from Tropheryma whipplei (strain TW08/27) (Whipple's bacillus).